Reading from the N-terminus, the 236-residue chain is Phycocyanobilin:ferredoxin oxidoreductase (236 aa).

The protein belongs to the HY2 family.

It carries out the reaction (2R,3Z)-phycocyanobilin + 4 oxidized [2Fe-2S]-[ferredoxin] = biliverdin IXalpha + 4 reduced [2Fe-2S]-[ferredoxin] + 4 H(+). Functionally, catalyzes the four-electron reduction of biliverdin IX-alpha (2-electron reduction at both the A and D rings); the reaction proceeds via an isolatable 2-electron intermediate, 181,182-dihydrobiliverdin. This chain is Phycocyanobilin:ferredoxin oxidoreductase (pcyA), found in Thermosynechococcus vestitus (strain NIES-2133 / IAM M-273 / BP-1).